The primary structure comprises 421 residues: CinA-like protein (421 aa).

This sequence belongs to the CinA family.

This Myxococcus xanthus (strain DK1622) protein is CinA-like protein.